Here is a 361-residue protein sequence, read N- to C-terminus: 3-dehydroquinate synthase (361 aa).

The protein belongs to the archaeal-type DHQ synthase family.

It catalyses the reaction 2-amino-2,3,7-trideoxy-D-lyxo-hept-6-ulosonate + NAD(+) + H2O = 3-dehydroquinate + NH4(+) + NADH + H(+). Its function is as follows. Catalyzes the oxidative deamination and cyclization of 2-amino-3,7-dideoxy-D-threo-hept-6-ulosonic acid (ADH) to yield 3-dehydroquinate (DHQ), which is fed into the canonical shikimic pathway of aromatic amino acid biosynthesis. This Methanococcus maripaludis (strain C6 / ATCC BAA-1332) protein is 3-dehydroquinate synthase.